The sequence spans 465 residues: ATP synthase subunit beta (465 aa).

148–155 serves as a coordination point for ATP; it reads GGAGVGKT.

It belongs to the ATPase alpha/beta chains family. F-type ATPases have 2 components, CF(1) - the catalytic core - and CF(0) - the membrane proton channel. CF(1) has five subunits: alpha(3), beta(3), gamma(1), delta(1), epsilon(1). CF(0) has three main subunits: a(1), b(2) and c(9-12). The alpha and beta chains form an alternating ring which encloses part of the gamma chain. CF(1) is attached to CF(0) by a central stalk formed by the gamma and epsilon chains, while a peripheral stalk is formed by the delta and b chains.

The protein localises to the cell inner membrane. It carries out the reaction ATP + H2O + 4 H(+)(in) = ADP + phosphate + 5 H(+)(out). Produces ATP from ADP in the presence of a proton gradient across the membrane. The catalytic sites are hosted primarily by the beta subunits. This chain is ATP synthase subunit beta, found in Neisseria meningitidis serogroup B (strain ATCC BAA-335 / MC58).